Consider the following 159-residue polypeptide: Ribonuclease H (159 aa).

The RNase H type-1 domain occupies 1 to 145; the sequence is MTHIRAIYTD…CDLIARRLSR (145 aa). 4 residues coordinate Mg(2+): aspartate 10, glutamate 49, aspartate 74, and aspartate 137.

The protein belongs to the RNase H family. Monomer. It depends on Mg(2+) as a cofactor.

The protein resides in the cytoplasm. The enzyme catalyses Endonucleolytic cleavage to 5'-phosphomonoester.. Endonuclease that specifically degrades the RNA of RNA-DNA hybrids. The polypeptide is Ribonuclease H (Thermosynechococcus vestitus (strain NIES-2133 / IAM M-273 / BP-1)).